Consider the following 605-residue polypeptide: MASLPARRIRNFSIIAHIDHGKSTLADTLLMRTKTVKERDMVKQVLDSMDLERERGITIKLNSARMDYVASDGELYVLNLIDTPGHVDFSYEVSRSLAACEGALLVVDSSQGVEAQTVANVYLALENDLEIFTVLNKIDLAGSEPDRVKQEIEDVLGLDASDAILASAKANIGMDDILERIVQVVPPPRDTANEPLRALIFDSYFDPYRGVVAVFRVMDGTMKTGDAMKMMATGATFAADEIGIMRPDKVPVKELGPGEVGYIIGGIKSVADARVGDTITLSKNPAAEALPGYSKSVPMVFAGIFPTDTDRYDDLRESLQRLQINDCSLSFEPEQNSAMGTGFRCGFLGLLHMEIIQERLEREYDLDLITTAPSVVYNVYRTDGTMDSISNPADLCPPELRERIEEPYCRLDMIAPSDYVGTLMELASQRRGEFIDMTYLSETRTSIKYDIPLAEVVTNYFDDMKSRSRGYASMEYAITGYRQSDLVRLDVLINQEPADPLAVITHRDRAYSIGRQLVDKLKELIPRQMFRIPIQAAIGNKVIAATSISAMRKDVTAKCYGGDISRKKKLLKKQAAGKKRMKQFGKVEVPQDAFLAVLSVDGAAD.

A tr-type G domain is found at 7–189; sequence RRIRNFSIIA…RIVQVVPPPR (183 aa). Residues 16–23, 82–86, and 136–139 each bind GTP; these read AHIDHGKS, DTPGH, and NKID.

The protein belongs to the TRAFAC class translation factor GTPase superfamily. Classic translation factor GTPase family. LepA subfamily.

The protein localises to the plastid. Its subcellular location is the chloroplast. It carries out the reaction GTP + H2O = GDP + phosphate + H(+). Its function is as follows. Promotes chloroplast protein synthesis. May act as a fidelity factor of the translation reaction, by catalyzing a one-codon backward translocation of tRNAs on improperly translocated ribosomes. This is Translation factor GUF1 homolog, chloroplastic from Ostreococcus lucimarinus (strain CCE9901).